The primary structure comprises 640 residues: Threonine--tRNA ligase (640 aa).

A TGS domain is found at 1–61 (MPTITLPDGS…ERDASLQIIT (61 aa)). The tract at residues 242 to 533 (DHRRIGKQLD…LIEHYAGAFP (292 aa)) is catalytic. Zn(2+) is bound by residues Cys-333, His-384, and His-510.

It belongs to the class-II aminoacyl-tRNA synthetase family. Homodimer. Requires Zn(2+) as cofactor.

It localises to the cytoplasm. It catalyses the reaction tRNA(Thr) + L-threonine + ATP = L-threonyl-tRNA(Thr) + AMP + diphosphate + H(+). Functionally, catalyzes the attachment of threonine to tRNA(Thr) in a two-step reaction: L-threonine is first activated by ATP to form Thr-AMP and then transferred to the acceptor end of tRNA(Thr). Also edits incorrectly charged L-seryl-tRNA(Thr). The chain is Threonine--tRNA ligase from Stutzerimonas stutzeri (strain A1501) (Pseudomonas stutzeri).